The chain runs to 457 residues: Paired box protein Pax-8 (457 aa).

Positions 9–135 (GHGGLNQLGG…SSINRIIRTK (127 aa)) form a DNA-binding region, paired. A PAI subdomain region spans residues 12-68 (GLNQLGGAFVNGRPLPEVVRQRIVDLAHQGVRPCDISRQLRVSHGCVSKILGRYYET). The RED subdomain stretch occupies residues 87–135 (KVVEKIGDYKRQNPTMFAWEIRDRLLAEGVCDNDTVPSVSSINRIIRTK). Residues 159–182 (LIPSSAVTPPESPQSDSLGSTYSI) show a composition bias toward polar residues. A disordered region spans residues 159-226 (LIPSSAVTPP…SSGPRKHLRT (68 aa)). Ser304 is subject to Phosphoserine.

Interacts with WWTR1.

The protein resides in the nucleus. In terms of biological role, thought to encode a transcription factor. It may have a role in kidney cell differentiation. May play a regulatory role in mammalian development. This is Paired box protein Pax-8 (Pax8) from Rattus norvegicus (Rat).